The sequence spans 152 residues: Deoxyuridine 5'-triphosphate nucleotidohydrolase (152 aa).

Substrate contacts are provided by residues 71-73, asparagine 84, 88-90, and methionine 98; these read RSG and LID.

This sequence belongs to the dUTPase family. Mg(2+) serves as cofactor.

It carries out the reaction dUTP + H2O = dUMP + diphosphate + H(+). It functions in the pathway pyrimidine metabolism; dUMP biosynthesis; dUMP from dCTP (dUTP route): step 2/2. This enzyme is involved in nucleotide metabolism: it produces dUMP, the immediate precursor of thymidine nucleotides and it decreases the intracellular concentration of dUTP so that uracil cannot be incorporated into DNA. This chain is Deoxyuridine 5'-triphosphate nucleotidohydrolase, found in Serratia proteamaculans (strain 568).